The following is a 145-amino-acid chain: Basic phospholipase A2 KPA2 (145 aa).

Positions 1–19 (MYPAHLLVLVAVCVSLLGA) are cleaved as a signal peptide. Residues 20–27 (ANIPPQPL) constitute a propeptide that is removed on maturation. 7 disulfide bridges follow: Cys-38–Cys-97, Cys-52–Cys-144, Cys-54–Cys-70, Cys-69–Cys-125, Cys-76–Cys-118, Cys-86–Cys-111, and Cys-104–Cys-116. Ca(2+) contacts are provided by Tyr-53, Gly-55, and Gly-57. Residue His-73 is part of the active site. Asp-74 contributes to the Ca(2+) binding site. Residue Asp-119 is part of the active site.

This sequence belongs to the phospholipase A2 family. Group I subfamily. D49 sub-subfamily. As to quaternary structure, monomer. Ca(2+) serves as cofactor. In terms of tissue distribution, expressed by the venom gland.

Its subcellular location is the secreted. It catalyses the reaction a 1,2-diacyl-sn-glycero-3-phosphocholine + H2O = a 1-acyl-sn-glycero-3-phosphocholine + a fatty acid + H(+). Its function is as follows. Snake venom phospholipase A2 (PLA2) that shows anticoagulant and neurotoxic activities. PLA2 catalyzes the calcium-dependent hydrolysis of the 2-acyl groups in 3-sn-phosphoglycerides. The protein is Basic phospholipase A2 KPA2 of Bungarus caeruleus (Indian krait).